A 257-amino-acid polypeptide reads, in one-letter code: Hydroxyacylglutathione hydrolase (257 aa).

Positions 54, 56, 58, 59, 109, 129, and 167 each coordinate Zn(2+).

Belongs to the metallo-beta-lactamase superfamily. Glyoxalase II family. As to quaternary structure, monomer. It depends on Zn(2+) as a cofactor.

It catalyses the reaction an S-(2-hydroxyacyl)glutathione + H2O = a 2-hydroxy carboxylate + glutathione + H(+). It functions in the pathway secondary metabolite metabolism; methylglyoxal degradation; (R)-lactate from methylglyoxal: step 2/2. Functionally, thiolesterase that catalyzes the hydrolysis of S-D-lactoyl-glutathione to form glutathione and D-lactic acid. The protein is Hydroxyacylglutathione hydrolase of Marinomonas sp. (strain MWYL1).